The sequence spans 142 residues: FAD synthase (142 aa).

ATP is bound by residues threonine 9–phenylalanine 10, histidine 14–histidine 17, and aspartate 92.

It belongs to the archaeal FAD synthase family. As to quaternary structure, homodimer. The cofactor is a divalent metal cation.

It carries out the reaction FMN + ATP + H(+) = FAD + diphosphate. The protein operates within cofactor biosynthesis; FAD biosynthesis; FAD from FMN: step 1/1. Functionally, catalyzes the transfer of the AMP portion of ATP to flavin mononucleotide (FMN) to produce flavin adenine dinucleotide (FAD) coenzyme. The polypeptide is FAD synthase (Haloferax volcanii (strain ATCC 29605 / DSM 3757 / JCM 8879 / NBRC 14742 / NCIMB 2012 / VKM B-1768 / DS2) (Halobacterium volcanii)).